Reading from the N-terminus, the 344-residue chain is MKLAILGAGCYRTHAASGITNFSRACEVAEMVGKPEIAMTHSTITMGAELKELAGVDEVVVADPVFDNQFTVIDDFAYEDVIEAHKEDPEKIMPQIREKVNEVAKELPKPPEGAIHFTHPEDLGFEITTDDREAVADADFIMTWFPKGDMQPGIINKFIDDIKPGAIVTHACTIPTTKFYKIFEEKHGDLVTRPETLNVTSYHPGAVPEMKGQVYIAEGYASEEAINTLFELGQKARGNAYKLPAELLGPVCDMCSALTAITYAGILTYRDSVTQVLGAPAGFAQMMAKESLEQLTALMDKVGIDKMEESLDPGALLGTADSMNFGASAEILPTVFEVLEKRKK.

Belongs to the HMD family.

The enzyme catalyses 5,10-methenyl-5,6,7,8-tetrahydromethanopterin + H2 = 5,10-methylenetetrahydromethanopterin + H(+). It functions in the pathway one-carbon metabolism; methanogenesis from CO(2); 5,10-methylene-5,6,7,8-tetrahydromethanopterin from 5,10-methenyl-5,6,7,8-tetrahydromethanopterin (hydrogen route): step 1/1. Functionally, catalyzes the reversible reduction of methenyl-H(4)MPT(+) to methylene-H(4)MPT. In Methanothermobacter thermautotrophicus (Methanobacterium thermoformicicum), this protein is 5,10-methenyltetrahydromethanopterin hydrogenase (hmd).